Reading from the N-terminus, the 393-residue chain is MAEEFKATASICGGGGGAWWNSPRSVMSPSDHFLSPCFGAAITSNDFSSQENHLKSRMTCTDNNNIVFGQREADSDSGGSTVTMDSTLQMMGLGFSSNCSSDWNQTILQEDLNSSFIRSSQDQDHGQGFLSTTTSPYILNPACSSSPSTSSSSSLIRTFYDPEPSPYNFVSTTSGSINDPQLSWANKTNPHHQVAYGLINSFSNNANSRPFWNSSSTTNLNNTTPSNFVTTPQIISTRLEDKTKNLKTRAQSESLKRAKDNESAAKKPRVTTPSPLPTFKVRKENLRDQITSLQQLVSPFGKTDTASVLQEAIEYIKFLHDQVTVLSTPYMKQGASNQQQQQISGKSKSQDENENHELRGHGLCLVPISSTFPVANETTADFWTPTFGGNNFR.

Disordered regions lie at residues 248-277 (TRAQ…SPLP) and 332-356 (KQGA…NENH). A compositionally biased stretch (basic and acidic residues) spans 254-265 (SLKRAKDNESAA). In terms of domain architecture, bHLH spans 270–319 (VTTPSPLPTFKVRKENLRDQITSLQQLVSPFGKTDTASVLQEAIEYIKFL). The span at 332-347 (KQGASNQQQQQISGKS) shows a compositional bias: low complexity.

Homodimer.

Its subcellular location is the nucleus. In Arabidopsis thaliana (Mouse-ear cress), this protein is Transcription factor bHLH112 (BHLH112).